An 826-amino-acid polypeptide reads, in one-letter code: G-protein coupled receptor-associated sorting protein 2 (826 aa).

4 disordered regions span residues 1-126 (MTGA…AQAW), 204-286 (WCYP…NPFC), 336-371 (EGNR…QESR), and 506-534 (IPEG…DSVA). Residues 13–31 (KPDKKPQEEVAGGAERESE) are compositionally biased toward basic and acidic residues. Residues 59–73 (SSRARPKTETQSVSG) show a composition bias toward polar residues. A compositionally biased stretch (basic and acidic residues) spans 231–247 (TREETSIRSWPREEVNT). Positions 248–264 (RSRHRAKHQTNARSKPR) are enriched in basic residues. Serine 275 and serine 277 each carry phosphoserine.

The protein belongs to the GPRASP family. As to quaternary structure, interacts with cytoplasmic tails of a variety of G-protein coupled receptors such as muscarinic acetylcholine receptor M1/CHRM1 and calcitonin receptor/CALCR. Strongly expressed in the brain and the cochlea. Also in lung and muscle tissues. Localized in multiple structures of the cochlea, detected in the spiral ganglion, stria vascularis, spiral ligament, inner and outer hair cells.

May play a role in regulation of a variety of G-protein coupled receptors. This Mus musculus (Mouse) protein is G-protein coupled receptor-associated sorting protein 2 (Gprasp2).